Reading from the N-terminus, the 1104-residue chain is SWI/SNF complex subunit SMARCC1 (1104 aa).

Positions 27–301 are marR-like, BRCT and chromo domains module; that stretch reads LAVYRRKDGG…PVSFRQRIST (275 aa). Residues 37-163 form the MarR-like domain; the sequence is PASKFWESPD…IEKTLVQNNC (127 aa). Residues 167-210 enclose the BRCT; N-terminus domain; it reads PNIYLIPDIDLKLANKLKDIIKRHQGTFTDEKSKASHHIYPYPS. A Glycyl lysine isopeptide (Lys-Gly) (interchain with G-Cter in SUMO2) cross-link involves residue K178. The region spanning 216–244 is the Chromo domain; sequence EWLRPVMRRDKQVLVHWGFYPDSYDTWVH. A BRCT; C-terminus domain is found at 260 to 284; that stretch reads KPWKVHVKWILDTDVFNEWMNEEDY. Residues 295-445 form a disordered region; it reads FRQRISTKNE…PGEDNVTEQT (151 aa). The span at 301–317 shows a compositional bias: basic and acidic residues; the sequence is TKNEEPVRSPERRDRKA. Residues S309, S327, and S329 each carry the phosphoserine modification. T334 carries the phosphothreonine modification. K344 and K345 each carry N6-acetyllysine. S349 carries the phosphoserine modification. N6-acetyllysine is present on K353. Residue S356 is modified to Phosphoserine. K358 bears the N6-acetyllysine; alternate mark. Residue K358 forms a Glycyl lysine isopeptide (Lys-Gly) (interchain with G-Cter in SUMO2); alternate linkage. The residue at position 397 (T397) is a Phosphothreonine. The SWIRM domain maps to 448-545; sequence IIIPSYASWF…YQVDPESRPM (98 aa). Phosphoserine is present on S572. A Glycyl lysine isopeptide (Lys-Gly) (interchain with G-Cter in SUMO2) cross-link involves residue K591. Residues 617–668 form the SANT domain; the sequence is SAGREWTEQETLLLLEALEMYKDDWNKVSEHVGSRTQDECILHFLRLPIEDP. Residue K738 forms a Glycyl lysine isopeptide (Lys-Gly) (interchain with G-Cter in SUMO2) linkage. Residues 744–859 are disordered; that stretch reads ARASGKVDPT…DAGKKKVEHE (116 aa). Phosphoserine is present on S775. Residues 775-784 are compositionally biased toward acidic residues; sequence SEEEKMETDP. Residues 788–859 show a composition bias toward basic and acidic residues; it reads QPEKAENKVE…DAGKKKVEHE (72 aa). A Glycyl lysine isopeptide (Lys-Gly) (interchain with G-Cter in SUMO2) cross-link involves residue K795. S821 and S824 each carry phosphoserine. Glycyl lysine isopeptide (Lys-Gly) (interchain with G-Cter in SUMO2) cross-links involve residues K828 and K855. Residues 909 to 945 adopt a coiled-coil conformation; the sequence is KLRHFEELETIMDREKEALEQQRQQLLTERQNFHMEQ. K947 is subject to N6-acetyllysine. Disordered stretches follow at residues 955–1021 and 1041–1104; these read QQME…PGPG and IHPT…SATP. Residues 956–973 show a composition bias toward low complexity; sequence QMEQQQQHGQTPQQAHQH. Composition is skewed to pro residues over residues 994-1017 and 1048-1057; these read QQPP…PGQI and PTPPGMPPMP. An Asymmetric dimethylarginine modification is found at R1064. A compositionally biased stretch (pro residues) spans 1073–1104; it reads MYPPPPQQQQPPPPADGVPPPPAPGPPASATP.

This sequence belongs to the SMARCC family. As to quaternary structure, component of the multiprotein chromatin-remodeling complexes SWI/SNF: SWI/SNF-A (BAF), SWI/SNF-B (PBAF) and related complexes. The canonical complex contains a catalytic subunit (either SMARCA4/BRG1/BAF190A or SMARCA2/BRM/BAF190B) and at least SMARCE1, ACTL6A/BAF53, SMARCC1/BAF155, SMARCC2/BAF170, and SMARCB1/SNF5/BAF47. Other subunits specific to each of the complexes may also be present permitting several possible combinations developmentally and tissue specific. Component of the BAF complex, which includes at least actin (ACTB), ARID1A/BAF250A, ARID1B/BAF250B, SMARCA2/BRM, SMARCA4/BRG1, ACTL6A/BAF53, ACTL6B/BAF53B, SMARCE1/BAF57, SMARCC1/BAF155, SMARCC2/BAF170, SMARCB1/SNF5/INI1, and one or more SMARCD1/BAF60A, SMARCD2/BAF60B, or SMARCD3/BAF60C. In muscle cells, the BAF complex also contains DPF3. Component of neural progenitors-specific chromatin remodeling complex (npBAF complex) composed of at least, ARID1A/BAF250A or ARID1B/BAF250B, SMARCD1/BAF60A, SMARCD3/BAF60C, SMARCA2/BRM/BAF190B, SMARCA4/BRG1/BAF190A, SMARCB1/BAF47, SMARCC1/BAF155, SMARCE1/BAF57, SMARCC2/BAF170, PHF10/BAF45A, ACTL6A/BAF53A and actin. Component of neuron-specific chromatin remodeling complex (nBAF complex) composed of at least, ARID1A/BAF250A or ARID1B/BAF250B, SMARCD1/BAF60A, SMARCD3/BAF60C, SMARCA2/BRM/BAF190B, SMARCA4/BRG1/BAF190A, SMARCB1/BAF47, SMARCC1/BAF155, SMARCE1/BAF57, SMARCC2/BAF170, DPF1/BAF45B, DPF3/BAF45C, ACTL6B/BAF53B and actin. Component of the SWI/SNF-B (PBAF) chromatin remodeling complex, at least composed of SMARCA4/BRG1, SMARCB1/BAF47/SNF5, ACTL6A/BAF53A or ACTL6B/BAF53B, SMARCE1/BAF57, SMARCD1/BAF60A, SMARCD2/BAF60B, perhaps SMARCD3/BAF60C, SMARCC1/BAF155, SMARCC2/BAF170, PBRM1/BAF180, ARID2/BAF200 and actin. Component of SWI/SNF (GBAF) subcomplex, which includes at least BICRA or BICRAL (mutually exclusive), BRD9, SS18, SMARCA2/BRM, SMARCA4/BRG1/BAF190A, ACTL6A/BAF53, SMARCC1/BAF155, and SMARCD1/BAF60A. May also interact with the SIN3A histone deacetylase transcription repressor complex in conjunction with SMARCA2 and SMARCA4. The minimal complex composed of SMARCC1 and SMARCA4 seems to be able to associate with cyclin such as CCNE1 or transcription factors such as KLF1 or GATA1. Interacts with NR3C1 and SMARD1. Interacts with TRIP12; leading to disrupt interaction between TRIP12 and SMARCE1 and prevent SMARCE1 ubiquitination. Interacts with CEBPB (when not methylated). Interacts with KDM6B. Interacts with MKKS; the interaction takes place predominantly in the cytoplasm and may modulate SMARCC1 location. Interacts with DPF2. Interacts with PRDM1/BLIMP1. Interacts with DPF3a (isoform 2 of DPF3/BAF45C) and with HDGFL2 in a DPF3a-dependent manner. As to expression, highly expressed in adult brain, testis and thymus.

The protein localises to the nucleus. It is found in the cytoplasm. Its function is as follows. Involved in transcriptional activation and repression of select genes by chromatin remodeling (alteration of DNA-nucleosome topology). Component of SWI/SNF chromatin remodeling complexes that carry out key enzymatic activities, changing chromatin structure by altering DNA-histone contacts within a nucleosome in an ATP-dependent manner. May stimulate the ATPase activity of the catalytic subunit of the complex. Belongs to the neural progenitors-specific chromatin remodeling complex (npBAF complex) and the neuron-specific chromatin remodeling complex (nBAF complex). During neural development a switch from a stem/progenitor to a postmitotic chromatin remodeling mechanism occurs as neurons exit the cell cycle and become committed to their adult state. The transition from proliferating neural stem/progenitor cells to postmitotic neurons requires a switch in subunit composition of the npBAF and nBAF complexes. As neural progenitors exit mitosis and differentiate into neurons, npBAF complexes which contain ACTL6A/BAF53A and PHF10/BAF45A, are exchanged for homologous alternative ACTL6B/BAF53B and DPF1/BAF45B or DPF3/BAF45C subunits in neuron-specific complexes (nBAF). The npBAF complex is essential for the self-renewal/proliferative capacity of the multipotent neural stem cells. The nBAF complex along with CREST plays a role regulating the activity of genes essential for dendrite growth. In Mus musculus (Mouse), this protein is SWI/SNF complex subunit SMARCC1 (Smarcc1).